Reading from the N-terminus, the 318-residue chain is NADH-ubiquinone oxidoreductase chain 1 (318 aa).

8 helical membrane passes run 2-22 (FMIN…FLTL), 70-90 (MFII…IPLP), 100-120 (LGIL…LWSG), 147-167 (AIIL…TLII), 171-191 (YLWL…STLA), 217-237 (AGPF…MNIF), 254-276 (LYSI…IRAS), and 294-314 (LPLT…LSSI).

The protein belongs to the complex I subunit 1 family. In terms of assembly, core subunit of respiratory chain NADH dehydrogenase (Complex I) which is composed of 45 different subunits.

Its subcellular location is the mitochondrion inner membrane. The enzyme catalyses a ubiquinone + NADH + 5 H(+)(in) = a ubiquinol + NAD(+) + 4 H(+)(out). Its function is as follows. Core subunit of the mitochondrial membrane respiratory chain NADH dehydrogenase (Complex I) which catalyzes electron transfer from NADH through the respiratory chain, using ubiquinone as an electron acceptor. Essential for the catalytic activity and assembly of complex I. The protein is NADH-ubiquinone oxidoreductase chain 1 (MT-ND1) of Equus asinus (Donkey).